The sequence spans 42 residues: MEGLTKFLSTAPVLIMALLTVTAGILIEFNRFYPDLLFHPLG.

Residues 7–27 form a helical membrane-spanning segment; it reads FLSTAPVLIMALLTVTAGILI.

The protein belongs to the PsaJ family.

The protein localises to the cellular thylakoid membrane. Its function is as follows. May help in the organization of the PsaE and PsaF subunits. The protein is Photosystem I reaction center subunit IX of Crocosphaera subtropica (strain ATCC 51142 / BH68) (Cyanothece sp. (strain ATCC 51142)).